A 143-amino-acid chain; its full sequence is Flagellar assembly factor FliW (143 aa).

The protein belongs to the FliW family. As to quaternary structure, interacts with translational regulator CsrA and flagellin(s).

Its subcellular location is the cytoplasm. Functionally, acts as an anti-CsrA protein, binds CsrA and prevents it from repressing translation of its target genes, one of which is flagellin. Binds to flagellin and participates in the assembly of the flagellum. In Bacillus licheniformis (strain ATCC 14580 / DSM 13 / JCM 2505 / CCUG 7422 / NBRC 12200 / NCIMB 9375 / NCTC 10341 / NRRL NRS-1264 / Gibson 46), this protein is Flagellar assembly factor FliW.